Reading from the N-terminus, the 810-residue chain is Phospholipase D alpha 1 (810 aa).

Residues 1 to 36 (MAQHLLHGTLHATIYEVDDLHTGGLRSGFFGKILAN) constitute a propeptide that is removed on maturation. The region spanning 1 to 126 (MAQHLLHGTL…IHGEEVDQWV (126 aa)) is the C2 domain. D187 contributes to the Ca(2+) binding site. Residues 327-366 (AMFTHHQKIVVVDSEMPSRGGSQMRRIVSFVGGIDLCDGR) enclose the PLD phosphodiesterase 1 domain. Active-site residues include H332, K334, and D339. H332 contacts a 1,2-diacyl-sn-glycero-3-phosphate. Residues H372 and H406 each contribute to the Ca(2+) site. Q522 and H661 together coordinate a 1,2-diacyl-sn-glycero-3-phosphate. One can recognise a PLD phosphodiesterase 2 domain in the interval 656 to 683 (FMIYVHTKMMIVDDEYIIIGSANINQRS). Active-site residues include H661, K663, and D668. Residue E722 participates in Ca(2+) binding.

The protein belongs to the phospholipase D family. C2-PLD subfamily. Requires Ca(2+) as cofactor.

Its subcellular location is the cytoplasm. The protein localises to the membrane. It carries out the reaction a 1,2-diacyl-sn-glycero-3-phosphocholine + H2O = a 1,2-diacyl-sn-glycero-3-phosphate + choline + H(+). In terms of biological role, hydrolyzes glycerol-phospholipids at the terminal phosphodiesteric bond. Plays an important role in various cellular processes, including phytohormone action, vesicular trafficking, secretion, cytoskeletal arrangement, meiosis, tumor promotion, pathogenesis, membrane deterioration and senescence. The sequence is that of Phospholipase D alpha 1 (PLD1) from Brassica oleracea var. capitata (Cabbage).